A 1418-amino-acid chain; its full sequence is ABC transporter G family member 38 (1418 aa).

The tract at residues 1-27 is disordered; sequence MAHYRVSSEVENIMNRDRSHRKNEEED. The ABC transporter 1 domain occupies 147–419; that stretch reads TKIRVLPDRK…FEFMGFKCPE (273 aa). 179-186 lines the ATP pocket; the sequence is GPPGSGKS. The 214-residue stretch at 497–710 folds into the ABC transmembrane type-2 1 domain; the sequence is ELLKACLERE…IQTAVSVNEF (214 aa). The next 6 helical transmembrane spans lie at 516-536, 548-568, 600-620, 634-654, 659-679, and 729-749; these read TFVL…VVFW, GIIY…SGFF, IITF…TYFT, YLVL…IAAV, VVSN…SGYV, and FFVE…STIL. The ABC transporter 2 domain occupies 821–1073; that stretch reads MTFENITYSV…QLIEYFEGIR (253 aa). 866-873 serves as a coordination point for ATP; it reads GVSGAGKT. The region spanning 1146–1360 is the ABC transmembrane type-2 2 domain; the sequence is SQFQACLWKQ…GLYGLTIAQY (215 aa). Transmembrane regions (helical) follow at residues 1167 to 1187, 1197 to 1217, 1249 to 1269, 1284 to 1304, 1310 to 1330, 1341 to 1361, and 1387 to 1407; these read AVRF…FWSL, IFNS…QSAA, VIIE…IVYG, IFFT…VISV, IASI…GFTI, WFTY…AQYG, and FLWV…FIYA.

This sequence belongs to the ABC transporter superfamily. ABCG family. PDR (TC 3.A.1.205) subfamily. In terms of tissue distribution, expressed in roots and siliques at low levels.

It is found in the membrane. Functionally, may be a general defense protein. The sequence is that of ABC transporter G family member 38 (ABCG38) from Arabidopsis thaliana (Mouse-ear cress).